Here is a 784-residue protein sequence, read N- to C-terminus: Kinesin-like protein Klp68D (784 aa).

Residues 19-344 (CVQVVVRCRP…LRYASRAKSI (326 aa)) form the Kinesin motor domain. 106–113 (GQTGTGKT) contributes to the ATP binding site. A coiled-coil region spans residues 351–385 (NEDPQDAKLKEYQEEIERLKRLIGPQQQQRSEKQV). Disordered stretches follow at residues 371–449 (RLIG…ERER), 605–652 (KFSS…PSSL), and 742–784 (IKSS…LVNK). Residues 386–396 (TAKKQRVKKPK) show a composition bias toward basic residues. A compositionally biased stretch (acidic residues) spans 416–428 (PVEDDSDPEGAES). Residues 426-582 (AESESDKENE…KRQLLIIDNF (157 aa)) are a coiled coil. Residues 429 to 449 (ESDKENEAEVAKSNEELERER) show a composition bias toward basic and acidic residues. Basic residues predominate over residues 622 to 634 (SSKRPVSHPQRRR). Residues 769-778 (KKPASAYPKA) are compositionally biased toward low complexity.

The protein belongs to the TRAFAC class myosin-kinesin ATPase superfamily. Kinesin family. Kinesin II subfamily. Expressed primarily in the central nervous system and in a subset of the peripheral nervous system during embryogenesis.

It localises to the cytoplasm. The protein resides in the cytoskeleton. In terms of biological role, plus-end directed microtubule motor that may be used for anterograde axonal transport and could conceivably move cargos in fly neurons different than those moved by kinesin heavy chain or other plus-end directed motors. The protein is Kinesin-like protein Klp68D (Klp68D) of Drosophila melanogaster (Fruit fly).